The following is an 89-amino-acid chain: Prostaglandin E2 receptor EP3 subtype (89 aa).

A helical transmembrane segment spans residues 1–18 (GVWLAVLAFALLPVLGVG). The Extracellular portion of the chain corresponds to 19 to 48 (QYTIQWPGTWCFISTGPGGNGTNSRQNWGN). Asn38 carries N-linked (GlcNAc...) asparagine glycosylation. A helical membrane pass occupies residues 49-74 (VFFASDFAILGLSALVVTFACNLATI). Residues 75–89 (KALVSRCRAKATASQ) lie on the Cytoplasmic side of the membrane.

Belongs to the G-protein coupled receptor 1 family. In terms of assembly, interacts (via C-terminus) with MKLN1.

The protein localises to the cell membrane. Functionally, receptor for prostaglandin E2 (PGE2). Required for normal development of fever in response to pyrinogens, including IL1B, prostaglandin E2 and bacterial lipopolysaccharide (LPS). Required for normal potentiation of platelet aggregation by prostaglandin E2, and thus plays a role in the regulation of blood coagulation. Required for increased HCO3(-) secretion in the duodenum in response to mucosal acidification, and thereby contributes to the protection of the mucosa against acid-induced ulceration. Not required for normal kidney function, normal urine volume and osmolality. The protein is Prostaglandin E2 receptor EP3 subtype (PTGER3) of Ovis aries (Sheep).